The following is a 530-amino-acid chain: 4-alpha-glucanotransferase (530 aa).

This sequence belongs to the disproportionating enzyme family.

It localises to the cytoplasm. The enzyme catalyses Transfers a segment of a (1-&gt;4)-alpha-D-glucan to a new position in an acceptor, which may be glucose or a (1-&gt;4)-alpha-D-glucan.. The chain is 4-alpha-glucanotransferase (malQ) from Chlamydia caviae (strain ATCC VR-813 / DSM 19441 / 03DC25 / GPIC) (Chlamydophila caviae).